Here is a 1792-residue protein sequence, read N- to C-terminus: D-lysergyl-peptide-synthetase subunit 3 (1792 aa).

The adenylation (A) domain stretch occupies residues 239-642; sequence FRQRCDLHPN…GRKDSQIKIR (404 aa). The region spanning 779 to 853 is the Carrier domain; it reads SNEEHRLQRM…DLARKASQSV (75 aa). Ser-813 carries the post-translational modification O-(pantetheine 4'-phosphoryl)serine. A condensation (C) domain region spans residues 895-1285; the sequence is EDIYPCTPMQ…HILGQIHGKE (391 aa). Residues 1415 to 1640 are reductase (R) domain; sequence VTGANGFIGT…AGEFNSSAGS (226 aa).

This sequence belongs to the NRP synthetase family.

It functions in the pathway alkaloid biosynthesis; ergot alkaloid biosynthesis. Functionally, D-lysergyl-peptide-synthetase subunit 3; part of the gene cluster that mediates the biosynthesis of fungal ergot alkaloid. DmaW catalyzes the first step of ergot alkaloid biosynthesis by condensing dimethylallyl diphosphate (DMAP) and tryptophan to form 4-dimethylallyl-L-tryptophan. The second step is catalyzed by the methyltransferase easF that methylates 4-dimethylallyl-L-tryptophan in the presence of S-adenosyl-L-methionine, resulting in the formation of 4-dimethylallyl-L-abrine. The catalase easC and the FAD-dependent oxidoreductase easE then transform 4-dimethylallyl-L-abrine to chanoclavine-I which is further oxidized by easD in the presence of NAD(+), resulting in the formation of chanoclavine-I aldehyde. Agroclavine dehydrogenase easG then mediates the conversion of chanoclavine-I aldehyde to agroclavine via a non-enzymatic adduct reaction: the substrate is an iminium intermediate that is formed spontaneously from chanoclavine-I aldehyde in the presence of glutathione. The presence of easA is not required to complete this reaction. Further conversion of agroclavine to paspalic acid is a two-step process involving oxidation of agroclavine to elymoclavine and of elymoclavine to paspalic acid, the second step being performed by the elymoclavine oxidase cloA. Paspalic acid is then further converted to D-lysergic acid. Ergopeptines are assembled from D-lysergic acid and three different amino acids by the D-lysergyl-peptide-synthetases composed each of a monomudular and a trimodular nonribosomal peptide synthetase subunit. LpsB and lpsC encode the monomodular subunits responsible for D-lysergic acid activation and incorporation into the ergopeptine backbone. LpsA1 and A2 subunits encode the trimodular nonribosomal peptide synthetase assembling the tripeptide portion of ergopeptines. LpsA1 is responsible for formation of the major ergopeptine, ergotamine, and lpsA2 for alpha-ergocryptine, the minor ergopeptine of the total alkaloid mixture elaborated by C.purpurea. D-lysergyl-tripeptides are assembled by the nonribosomal peptide synthetases and released as N-(D-lysergyl-aminoacyl)-lactams. Cyclolization of the D-lysergyl-tripeptides is performed by the Fe(2+)/2-ketoglutarate-dependent dioxygenase easH which introduces a hydroxyl group into N-(D-lysergyl-aminoacyl)-lactam at alpha-C of the aminoacyl residue followed by spontaneous condensation with the terminal lactam carbonyl group. The polypeptide is D-lysergyl-peptide-synthetase subunit 3 (Claviceps purpurea (strain 20.1) (Ergot fungus)).